Here is a 221-residue protein sequence, read N- to C-terminus: Phosphoribosylformylglycinamidine synthase subunit PurQ (221 aa).

Positions 8-221 constitute a Glutamine amidotransferase type-1 domain; that stretch reads NVGIIRFPGT…GLKFFKSFLD (214 aa). The Nucleophile role is filled by cysteine 91. Active-site residues include histidine 198 and glutamate 200.

As to quaternary structure, part of the FGAM synthase complex composed of 1 PurL, 1 PurQ and 2 PurS subunits.

Its subcellular location is the cytoplasm. The enzyme catalyses N(2)-formyl-N(1)-(5-phospho-beta-D-ribosyl)glycinamide + L-glutamine + ATP + H2O = 2-formamido-N(1)-(5-O-phospho-beta-D-ribosyl)acetamidine + L-glutamate + ADP + phosphate + H(+). The catalysed reaction is L-glutamine + H2O = L-glutamate + NH4(+). It participates in purine metabolism; IMP biosynthesis via de novo pathway; 5-amino-1-(5-phospho-D-ribosyl)imidazole from N(2)-formyl-N(1)-(5-phospho-D-ribosyl)glycinamide: step 1/2. Its function is as follows. Part of the phosphoribosylformylglycinamidine synthase complex involved in the purines biosynthetic pathway. Catalyzes the ATP-dependent conversion of formylglycinamide ribonucleotide (FGAR) and glutamine to yield formylglycinamidine ribonucleotide (FGAM) and glutamate. The FGAM synthase complex is composed of three subunits. PurQ produces an ammonia molecule by converting glutamine to glutamate. PurL transfers the ammonia molecule to FGAR to form FGAM in an ATP-dependent manner. PurS interacts with PurQ and PurL and is thought to assist in the transfer of the ammonia molecule from PurQ to PurL. The protein is Phosphoribosylformylglycinamidine synthase subunit PurQ of Methanosphaera stadtmanae (strain ATCC 43021 / DSM 3091 / JCM 11832 / MCB-3).